The following is a 718-amino-acid chain: MLFSINKLRDLANLDKQITNDQIIDAINKIGFEVESVKNFLNVSKIKFGLIKKVYKNPNASNLNVCEIEFEDKMRIIQTTAQNVEQNKYIVAFVENSTFGKIKIEAKEIKGTFSQGMLCSLEELGFDKSLIRDEFQDKIFLLDKADLKQDPIDFFDLDDQIVDVSILSNRSDANGYFIMALELSAFFETKTNFEIKNEIFKIHPNLKVDETNTLDFVLIEPQKELKKISLKDQILIMKSNIKTFNDLVDLTNLNLIMNAMPTHVYDKDKISNEISVKKVSQEVSILGNKKISLDNNLVVCSKEKPISIAGVIGIADFGSDQNTKNFVFEIGRFKTLDIQKSIKSVKLDTQSSKLSSKKISSGTFKMALNFLTSYFDSQVLVSKNLKDKKESFNFVWEDLNKFLNTDVKKMPHFNRVLKSLNILGFEFKDNKVYLPTYRHDIEHVQDILEEFLRFYGYENLVFEAPNIKNFETKNYEEYLNFIPYLNYSETRTYSLVSKDKNIFNPFNFKENINLETFHSKEREQIRNSMILSMEEVLQYNLKRKVENVNIFEIGIINNSQRSLALLSNQKSFNRFKEDVESILKDKLYSFEKGGFDFSHPLESIIIKDNDQLIGYIIRANAKDFEEDFVYAEILIDKLRNKKIENKSLNYLPLKTLDINFEVPSENGLFEVYKTLEKNEKIYSYKLIDHYQKNQISIYTIRIWAFEENIEELKTLFNL.

The region spanning 40–153 is the tRNA-binding domain; the sequence is FLNVSKIKFG…KADLKQDPID (114 aa). One can recognise a B5 domain in the interval 387–462; the sequence is DKKESFNFVW…RFYGYENLVF (76 aa). Mg(2+)-binding residues include D440, D446, E449, and E450.

It belongs to the phenylalanyl-tRNA synthetase beta subunit family. Type 1 subfamily. In terms of assembly, tetramer of two alpha and two beta subunits. Requires Mg(2+) as cofactor.

The protein localises to the cytoplasm. The catalysed reaction is tRNA(Phe) + L-phenylalanine + ATP = L-phenylalanyl-tRNA(Phe) + AMP + diphosphate + H(+). The chain is Phenylalanine--tRNA ligase beta subunit from Mycoplasmopsis pulmonis (strain UAB CTIP) (Mycoplasma pulmonis).